Here is a 61-residue protein sequence, read N- to C-terminus: MAKKSMIAKAARKPKFSVRGYTRCQICGRPHSVYRDFGICRVCLRKMANEGLIPGLKKASW.

Zn(2+) is bound by residues C24, C27, C40, and C43.

This sequence belongs to the universal ribosomal protein uS14 family. Zinc-binding uS14 subfamily. As to quaternary structure, part of the 30S ribosomal subunit. Contacts proteins S3 and S10. Zn(2+) is required as a cofactor.

Binds 16S rRNA, required for the assembly of 30S particles and may also be responsible for determining the conformation of the 16S rRNA at the A site. This chain is Small ribosomal subunit protein uS14, found in Campylobacter lari (strain RM2100 / D67 / ATCC BAA-1060).